A 440-amino-acid polypeptide reads, in one-letter code: 3-phosphoshikimate 1-carboxyvinyltransferase (440 aa).

3 residues coordinate 3-phosphoshikimate: Lys26, Ser27, and Arg31. Lys26 provides a ligand contact to phosphoenolpyruvate. Phosphoenolpyruvate is bound by residues Gly99 and Arg127. The 3-phosphoshikimate site is built by Ser172, Gln174, Asp320, and Lys347. Gln174 lines the phosphoenolpyruvate pocket. The active-site Proton acceptor is the Asp320. Phosphoenolpyruvate is bound by residues Arg351 and Arg392.

This sequence belongs to the EPSP synthase family. Monomer.

The protein localises to the cytoplasm. The catalysed reaction is 3-phosphoshikimate + phosphoenolpyruvate = 5-O-(1-carboxyvinyl)-3-phosphoshikimate + phosphate. It participates in metabolic intermediate biosynthesis; chorismate biosynthesis; chorismate from D-erythrose 4-phosphate and phosphoenolpyruvate: step 6/7. Functionally, catalyzes the transfer of the enolpyruvyl moiety of phosphoenolpyruvate (PEP) to the 5-hydroxyl of shikimate-3-phosphate (S3P) to produce enolpyruvyl shikimate-3-phosphate and inorganic phosphate. The chain is 3-phosphoshikimate 1-carboxyvinyltransferase from Xanthomonas oryzae pv. oryzae (strain MAFF 311018).